Here is a 259-residue protein sequence, read N- to C-terminus: Acyl-[acyl-carrier-protein]--UDP-N-acetylglucosamine O-acyltransferase (259 aa).

Belongs to the transferase hexapeptide repeat family. LpxA subfamily. As to quaternary structure, homotrimer.

The protein localises to the cytoplasm. The enzyme catalyses a (3R)-hydroxyacyl-[ACP] + UDP-N-acetyl-alpha-D-glucosamine = a UDP-3-O-[(3R)-3-hydroxyacyl]-N-acetyl-alpha-D-glucosamine + holo-[ACP]. Its pathway is glycolipid biosynthesis; lipid IV(A) biosynthesis; lipid IV(A) from (3R)-3-hydroxytetradecanoyl-[acyl-carrier-protein] and UDP-N-acetyl-alpha-D-glucosamine: step 1/6. In terms of biological role, involved in the biosynthesis of lipid A, a phosphorylated glycolipid that anchors the lipopolysaccharide to the outer membrane of the cell. In Psychrobacter arcticus (strain DSM 17307 / VKM B-2377 / 273-4), this protein is Acyl-[acyl-carrier-protein]--UDP-N-acetylglucosamine O-acyltransferase.